Reading from the N-terminus, the 1538-residue chain is Dicer-like protein 1 (1538 aa).

Residues 39–72 (DPAESSADVHKDEHSSDNSDNDNEAVPKPNDFSQ) are disordered. Positions 45 to 55 (ADVHKDEHSSD) are enriched in basic and acidic residues. In terms of domain architecture, Helicase ATP-binding spans 134–315 (LFERAKTQNT…EAATRLETLL (182 aa)). Position 147-154 (147-154 (LDTGSGKT)) interacts with ATP. The DEAH box motif lies at 260–263 (DEAH). One can recognise a Helicase C-terminal domain in the interval 460–619 (ELSKHFSDTT…ETLPEDRILH (160 aa)). One can recognise a Dicer dsRNA-binding fold domain in the interval 652-742 (AIAILARYAS…NSIYHRRLPA (91 aa)). One can recognise a PAZ domain in the interval 892 to 1020 (DTVSFVHNND…ICAEPLRISA (129 aa)). RNase III domains are found at residues 1044–1203 (IALE…LSGG) and 1254–1406 (ARHV…VDSK). Mg(2+) is bound by residues Glu-1295, Asp-1392, and Glu-1395. Positions 1440–1508 (TFLHNKLTNE…SEKALAVLDG (69 aa)) constitute a DRBM domain. 4 residues coordinate Zn(2+): Cys-1452, His-1479, Cys-1520, and Cys-1522.

It belongs to the helicase family. Dicer subfamily. It depends on Mg(2+) as a cofactor. The cofactor is Mn(2+).

Dicer-like endonuclease involved in cleaving double-stranded RNA in the RNA interference (RNAi) pathway. Produces 21 to 25 bp dsRNAs (siRNAs) which target the selective destruction of homologous RNAs leading to sequence-specific suppression of gene expression, called post-transcriptional gene silencing (PTGS). Part of a broad host defense response against viral infection and transposons. This chain is Dicer-like protein 1 (dcl1), found in Neosartorya fischeri (strain ATCC 1020 / DSM 3700 / CBS 544.65 / FGSC A1164 / JCM 1740 / NRRL 181 / WB 181) (Aspergillus fischerianus).